The sequence spans 383 residues: Chitinase-3-like protein 1 (383 aa).

The first 21 residues, 1 to 21 (MGLRASGTGFVVLVLLQSCAA), serve as a signal peptide directing secretion. In terms of domain architecture, GH18 spans 22 to 383 (YKLICYYTSW…SAVKDVLAEV (362 aa)). C26 and C51 form a disulfide bridge. N60 carries N-linked (GlcNAc...) asparagine glycosylation. Chitin-binding positions include 70 to 71 (EW), 97 to 100 (GGWN), Y141, 204 to 207 (LTYD), and R263. C300 and C364 are joined by a disulfide. Residues 324–338 (QWVAYDDQESVKNKA) form an important for AKT1 activation and IL8 production region. W352 provides a ligand contact to chitin. N367 is a glycosylation site (N-linked (GlcNAc...) asparagine).

It belongs to the glycosyl hydrolase 18 family. In terms of assembly, monomer.

It is found in the secreted. The protein localises to the extracellular space. The protein resides in the cytoplasm. Its subcellular location is the perinuclear region. It localises to the endoplasmic reticulum. Functionally, carbohydrate-binding lectin with a preference for chitin. Has no chitinase activity. May play a role in tissue remodeling and in the capacity of cells to respond to and cope with changes in their environment. Plays a role in T-helper cell type 2 (Th2) inflammatory response and IL-13-induced inflammation, regulating allergen sensitization, inflammatory cell apoptosis, dendritic cell accumulation and M2 macrophage differentiation. Facilitates invasion of pathogenic enteric bacteria into colonic mucosa and lymphoid organs. Mediates activation of AKT1 signaling pathway and subsequent IL8 production in colonic epithelial cells. Regulates antibacterial responses in lung by contributing to macrophage bacterial killing, controlling bacterial dissemination and augmenting host tolerance. Also regulates hyperoxia-induced injury, inflammation and epithelial apoptosis in lung. The sequence is that of Chitinase-3-like protein 1 (CHI3L1) from Capra hircus (Goat).